The following is a 259-amino-acid chain: 4-hydroxy-tetrahydrodipicolinate reductase (259 aa).

NAD(+) is bound by residues 8–13, 93–95, and 119–122; these read GFKGRM, GTT, and APNF. His149 acts as the Proton donor/acceptor in catalysis. His150 is a (S)-2,3,4,5-tetrahydrodipicolinate binding site. The active-site Proton donor is the Lys153. 159-160 is a binding site for (S)-2,3,4,5-tetrahydrodipicolinate; it reads GT.

The protein belongs to the DapB family.

The protein localises to the cytoplasm. The enzyme catalyses (S)-2,3,4,5-tetrahydrodipicolinate + NAD(+) + H2O = (2S,4S)-4-hydroxy-2,3,4,5-tetrahydrodipicolinate + NADH + H(+). It catalyses the reaction (S)-2,3,4,5-tetrahydrodipicolinate + NADP(+) + H2O = (2S,4S)-4-hydroxy-2,3,4,5-tetrahydrodipicolinate + NADPH + H(+). The protein operates within amino-acid biosynthesis; L-lysine biosynthesis via DAP pathway; (S)-tetrahydrodipicolinate from L-aspartate: step 4/4. In terms of biological role, catalyzes the conversion of 4-hydroxy-tetrahydrodipicolinate (HTPA) to tetrahydrodipicolinate. In Enterococcus faecalis (strain ATCC 700802 / V583), this protein is 4-hydroxy-tetrahydrodipicolinate reductase.